The primary structure comprises 352 residues: Phosphoribosylformylglycinamidine cyclo-ligase (352 aa).

This sequence belongs to the AIR synthase family.

It localises to the cytoplasm. It carries out the reaction 2-formamido-N(1)-(5-O-phospho-beta-D-ribosyl)acetamidine + ATP = 5-amino-1-(5-phospho-beta-D-ribosyl)imidazole + ADP + phosphate + H(+). Its pathway is purine metabolism; IMP biosynthesis via de novo pathway; 5-amino-1-(5-phospho-D-ribosyl)imidazole from N(2)-formyl-N(1)-(5-phospho-D-ribosyl)glycinamide: step 2/2. In Stenotrophomonas maltophilia (strain K279a), this protein is Phosphoribosylformylglycinamidine cyclo-ligase.